Consider the following 833-residue polypeptide: Leucine--tRNA ligase (833 aa).

The 'HIGH' region signature appears at 41-52 (PYPSGAGLHVGH). Positions 610 to 614 (KMSKS) match the 'KMSKS' region motif. Position 613 (Lys-613) interacts with ATP.

The protein belongs to the class-I aminoacyl-tRNA synthetase family.

The protein resides in the cytoplasm. The enzyme catalyses tRNA(Leu) + L-leucine + ATP = L-leucyl-tRNA(Leu) + AMP + diphosphate. This chain is Leucine--tRNA ligase, found in Streptococcus pneumoniae serotype 4 (strain ATCC BAA-334 / TIGR4).